Here is a 249-residue protein sequence, read N- to C-terminus: Acetylglutamate kinase (249 aa).

Substrate contacts are provided by residues 38–39 (GG), Arg-60, and Asn-147.

It belongs to the acetylglutamate kinase family. ArgB subfamily.

The protein localises to the cytoplasm. The catalysed reaction is N-acetyl-L-glutamate + ATP = N-acetyl-L-glutamyl 5-phosphate + ADP. The protein operates within amino-acid biosynthesis; L-arginine biosynthesis; N(2)-acetyl-L-ornithine from L-glutamate: step 2/4. Catalyzes the ATP-dependent phosphorylation of N-acetyl-L-glutamate. The sequence is that of Acetylglutamate kinase from Deinococcus geothermalis (strain DSM 11300 / CIP 105573 / AG-3a).